Reading from the N-terminus, the 1093-residue chain is Carbamoyl phosphate synthase large chain (1093 aa).

Residues 1–412 (MPRRNDIRKI…SLMKALRSLE (412 aa)) are carboxyphosphate synthetic domain. Positions 139, 179, 185, 186, 218, 220, 225, 251, 252, 253, 295, and 309 each coordinate ATP. An ATP-grasp 1 domain is found at 143–338 (KDAMTRIGLD…IAKIAAKLAV (196 aa)). The Mg(2+) site is built by Gln-295, Glu-309, and Asn-311. Residues Gln-295, Glu-309, and Asn-311 each coordinate Mn(2+). The oligomerization domain stretch occupies residues 413-560 (TGKRVGAEVL…YSSYEEEDEA (148 aa)). The interval 561 to 952 (PQTDKRKVII…AFAKAQLSAG (392 aa)) is carbamoyl phosphate synthetic domain. Positions 689–880 (GKLLEQLQIP…LAKIASRLMT (192 aa)) constitute an ATP-grasp 2 domain. Positions 725, 764, 766, 771, 796, 797, 798, 799, 839, and 851 each coordinate ATP. Mg(2+) is bound by residues Gln-839, Glu-851, and Asn-853. Gln-839, Glu-851, and Asn-853 together coordinate Mn(2+). An MGS-like domain is found at 953–1093 (LILPSSGTVF…QLLHAGHAVK (141 aa)). The interval 953–1093 (LILPSSGTVF…QLLHAGHAVK (141 aa)) is allosteric domain.

Belongs to the CarB family. As to quaternary structure, composed of two chains; the small (or glutamine) chain promotes the hydrolysis of glutamine to ammonia, which is used by the large (or ammonia) chain to synthesize carbamoyl phosphate. Tetramer of heterodimers (alpha,beta)4. It depends on Mg(2+) as a cofactor. Requires Mn(2+) as cofactor.

It catalyses the reaction hydrogencarbonate + L-glutamine + 2 ATP + H2O = carbamoyl phosphate + L-glutamate + 2 ADP + phosphate + 2 H(+). It carries out the reaction hydrogencarbonate + NH4(+) + 2 ATP = carbamoyl phosphate + 2 ADP + phosphate + 2 H(+). The protein operates within amino-acid biosynthesis; L-arginine biosynthesis; carbamoyl phosphate from bicarbonate: step 1/1. It participates in pyrimidine metabolism; UMP biosynthesis via de novo pathway; (S)-dihydroorotate from bicarbonate: step 1/3. Large subunit of the glutamine-dependent carbamoyl phosphate synthetase (CPSase). CPSase catalyzes the formation of carbamoyl phosphate from the ammonia moiety of glutamine, carbonate, and phosphate donated by ATP, constituting the first step of 2 biosynthetic pathways, one leading to arginine and/or urea and the other to pyrimidine nucleotides. The large subunit (synthetase) binds the substrates ammonia (free or transferred from glutamine from the small subunit), hydrogencarbonate and ATP and carries out an ATP-coupled ligase reaction, activating hydrogencarbonate by forming carboxy phosphate which reacts with ammonia to form carbamoyl phosphate. The protein is Carbamoyl phosphate synthase large chain of Acidobacterium capsulatum (strain ATCC 51196 / DSM 11244 / BCRC 80197 / JCM 7670 / NBRC 15755 / NCIMB 13165 / 161).